Consider the following 184-residue polypeptide: MAISRVWRNRLSFMAIMILVAMVLSLMSYALLWKAGNLTDVPNLRIGFYNFCLWKEDIGSLECYNFPELGVLGIPQVGLALARLGVYGALVLAVFVPLPLLLAQCNSDEGEWRLAVGFLGASSVLLAGGLSLFLFLVWKWLRLSFLGPGFLSLCLAQALLIILLMAMVMFPPRDKKDKNHWENC.

Residues 1-12 (MAISRVWRNRLS) lie on the Cytoplasmic side of the membrane. The helical transmembrane segment at 13 to 33 (FMAIMILVAMVLSLMSYALLW) threads the bilayer. The Extracellular segment spans residues 34 to 83 (KAGNLTDVPNLRIGFYNFCLWKEDIGSLECYNFPELGVLGIPQVGLALAR). N-linked (GlcNAc...) asparagine glycosylation occurs at Asn-37. The helical transmembrane segment at 84-104 (LGVYGALVLAVFVPLPLLLAQ) threads the bilayer. Residues 105-117 (CNSDEGEWRLAVG) are Cytoplasmic-facing. Residues 118 to 138 (FLGASSVLLAGGLSLFLFLVW) traverse the membrane as a helical segment. Residues 139-149 (KWLRLSFLGPG) are Extracellular-facing. A helical membrane pass occupies residues 150–170 (FLSLCLAQALLIILLMAMVMF). Over 171 to 184 (PPRDKKDKNHWENC) the chain is Cytoplasmic.

The protein localises to the membrane. This chain is Transmembrane protein 140 (Tmem140), found in Rattus norvegicus (Rat).